Here is a 495-residue protein sequence, read N- to C-terminus: Protein nucleotidyltransferase YdiU (495 aa).

Residues Gly92, Gly94, Arg95, Lys114, Asp126, Gly127, Arg177, and Arg184 each contribute to the ATP site. Asp261 (proton acceptor) is an active-site residue. Mg(2+) contacts are provided by Asn262 and Asp271. Asp271 contributes to the ATP binding site.

Belongs to the SELO family. The cofactor is Mg(2+). Requires Mn(2+) as cofactor.

The enzyme catalyses L-seryl-[protein] + ATP = 3-O-(5'-adenylyl)-L-seryl-[protein] + diphosphate. It catalyses the reaction L-threonyl-[protein] + ATP = 3-O-(5'-adenylyl)-L-threonyl-[protein] + diphosphate. It carries out the reaction L-tyrosyl-[protein] + ATP = O-(5'-adenylyl)-L-tyrosyl-[protein] + diphosphate. The catalysed reaction is L-histidyl-[protein] + UTP = N(tele)-(5'-uridylyl)-L-histidyl-[protein] + diphosphate. The enzyme catalyses L-seryl-[protein] + UTP = O-(5'-uridylyl)-L-seryl-[protein] + diphosphate. It catalyses the reaction L-tyrosyl-[protein] + UTP = O-(5'-uridylyl)-L-tyrosyl-[protein] + diphosphate. Functionally, nucleotidyltransferase involved in the post-translational modification of proteins. It can catalyze the addition of adenosine monophosphate (AMP) or uridine monophosphate (UMP) to a protein, resulting in modifications known as AMPylation and UMPylation. This chain is Protein nucleotidyltransferase YdiU, found in Bordetella bronchiseptica (strain ATCC BAA-588 / NCTC 13252 / RB50) (Alcaligenes bronchisepticus).